Reading from the N-terminus, the 509-residue chain is ATP synthase subunit alpha (509 aa).

Gly-169–Thr-176 provides a ligand contact to ATP.

This sequence belongs to the ATPase alpha/beta chains family. F-type ATPases have 2 components, CF(1) - the catalytic core - and CF(0) - the membrane proton channel. CF(1) has five subunits: alpha(3), beta(3), gamma(1), delta(1), epsilon(1). CF(0) has three main subunits: a(1), b(2) and c(9-12). The alpha and beta chains form an alternating ring which encloses part of the gamma chain. CF(1) is attached to CF(0) by a central stalk formed by the gamma and epsilon chains, while a peripheral stalk is formed by the delta and b chains.

It localises to the cell inner membrane. It carries out the reaction ATP + H2O + 4 H(+)(in) = ADP + phosphate + 5 H(+)(out). Its function is as follows. Produces ATP from ADP in the presence of a proton gradient across the membrane. The alpha chain is a regulatory subunit. The protein is ATP synthase subunit alpha of Chelativorans sp. (strain BNC1).